A 387-amino-acid polypeptide reads, in one-letter code: 3-ketoacyl-CoA thiolase (387 aa).

The Acyl-thioester intermediate role is filled by cysteine 91. Residues histidine 343 and cysteine 373 each act as proton acceptor in the active site.

Belongs to the thiolase-like superfamily. Thiolase family. In terms of assembly, heterotetramer of two alpha chains (FadB) and two beta chains (FadA).

It is found in the cytoplasm. It catalyses the reaction an acyl-CoA + acetyl-CoA = a 3-oxoacyl-CoA + CoA. The protein operates within lipid metabolism; fatty acid beta-oxidation. Catalyzes the final step of fatty acid oxidation in which acetyl-CoA is released and the CoA ester of a fatty acid two carbons shorter is formed. In Aeromonas hydrophila subsp. hydrophila (strain ATCC 7966 / DSM 30187 / BCRC 13018 / CCUG 14551 / JCM 1027 / KCTC 2358 / NCIMB 9240 / NCTC 8049), this protein is 3-ketoacyl-CoA thiolase.